The primary structure comprises 144 residues: 3-hydroxyacyl-[acyl-carrier-protein] dehydratase FabZ (144 aa).

Residue H51 is part of the active site.

This sequence belongs to the thioester dehydratase family. FabZ subfamily.

It localises to the cytoplasm. It carries out the reaction a (3R)-hydroxyacyl-[ACP] = a (2E)-enoyl-[ACP] + H2O. Its function is as follows. Involved in unsaturated fatty acids biosynthesis. Catalyzes the dehydration of short chain beta-hydroxyacyl-ACPs and long chain saturated and unsaturated beta-hydroxyacyl-ACPs. The polypeptide is 3-hydroxyacyl-[acyl-carrier-protein] dehydratase FabZ (Lactococcus lactis subsp. cremoris (strain MG1363)).